We begin with the raw amino-acid sequence, 270 residues long: MPELPEVETSRKGISPHLINKSVQNVVLRHTQLRWKIPQDLLSDIKDKILLSIDRRAKYLLFNFTSGTLLIHLGMSGSLRICPLNSPPKKHDHADLIFADCLLRYTDPRRFGAILWLGLTPEDSPLLNKLGPEPLNDDFNAKYLYQQATKRKLPVKQFIMDQKVVTGVGNIYATEALFNSGISPIRAAGNISEKRYQILVTEIKEILQQAIKQGGTTLKDFVGSDGKPGYFQQTLQVYGKTGQQCPSCETPLKAVKLAARASVYCPECQS.

The Schiff-base intermediate with DNA role is filled by P2. E3 acts as the Proton donor in catalysis. The Proton donor; for beta-elimination activity role is filled by K58. Residues H91, R109, and R151 each coordinate DNA. Residues 236-270 (QVYGKTGQQCPSCETPLKAVKLAARASVYCPECQS) form an FPG-type zinc finger. Residue R260 is the Proton donor; for delta-elimination activity of the active site.

Belongs to the FPG family. As to quaternary structure, monomer. Zn(2+) is required as a cofactor.

It catalyses the reaction Hydrolysis of DNA containing ring-opened 7-methylguanine residues, releasing 2,6-diamino-4-hydroxy-5-(N-methyl)formamidopyrimidine.. The enzyme catalyses 2'-deoxyribonucleotide-(2'-deoxyribose 5'-phosphate)-2'-deoxyribonucleotide-DNA = a 3'-end 2'-deoxyribonucleotide-(2,3-dehydro-2,3-deoxyribose 5'-phosphate)-DNA + a 5'-end 5'-phospho-2'-deoxyribonucleoside-DNA + H(+). Functionally, involved in base excision repair of DNA damaged by oxidation or by mutagenic agents. Acts as a DNA glycosylase that recognizes and removes damaged bases. Has a preference for oxidized purines, such as 7,8-dihydro-8-oxoguanine (8-oxoG). Has AP (apurinic/apyrimidinic) lyase activity and introduces nicks in the DNA strand. Cleaves the DNA backbone by beta-delta elimination to generate a single-strand break at the site of the removed base with both 3'- and 5'-phosphates. In Psychromonas ingrahamii (strain DSM 17664 / CCUG 51855 / 37), this protein is Formamidopyrimidine-DNA glycosylase.